Here is a 288-residue protein sequence, read N- to C-terminus: Acetyl-coenzyme A carboxylase carboxyl transferase subunit beta (288 aa).

Residues 34 to 288 (LFAKCPACKH…HLVSFHGGGQ (255 aa)) enclose the CoA carboxyltransferase N-terminal domain. The Zn(2+) site is built by cysteine 38, cysteine 41, cysteine 56, and cysteine 59. The segment at 38–59 (CPACKHMIYKKDLGLAKICPTC) adopts a C4-type zinc-finger fold.

It belongs to the AccD/PCCB family. As to quaternary structure, acetyl-CoA carboxylase is a heterohexamer composed of biotin carboxyl carrier protein (AccB), biotin carboxylase (AccC) and two subunits each of ACCase subunit alpha (AccA) and ACCase subunit beta (AccD). It depends on Zn(2+) as a cofactor.

Its subcellular location is the cytoplasm. The catalysed reaction is N(6)-carboxybiotinyl-L-lysyl-[protein] + acetyl-CoA = N(6)-biotinyl-L-lysyl-[protein] + malonyl-CoA. It functions in the pathway lipid metabolism; malonyl-CoA biosynthesis; malonyl-CoA from acetyl-CoA: step 1/1. Its function is as follows. Component of the acetyl coenzyme A carboxylase (ACC) complex. Biotin carboxylase (BC) catalyzes the carboxylation of biotin on its carrier protein (BCCP) and then the CO(2) group is transferred by the transcarboxylase to acetyl-CoA to form malonyl-CoA. In Streptococcus pyogenes serotype M49 (strain NZ131), this protein is Acetyl-coenzyme A carboxylase carboxyl transferase subunit beta.